Here is a 1516-residue protein sequence, read N- to C-terminus: Neurite extension and migration factor (1516 aa).

Residues 380–405 (LDKKKGKEEGQEDKGVEKKDGKDNGE) show a composition bias toward basic and acidic residues. Disordered regions lie at residues 380-440 (LDKK…GSFS), 589-610 (QKKKKQRNTNTDSIKTPFSQKQ), 1158-1225 (TFND…STKK), 1373-1419 (TPQE…PGYN), and 1437-1479 (LGNN…ESGT). 3 stretches are compositionally biased toward polar residues: residues 596 to 610 (NTNTDSIKTPFSQKQ), 1158 to 1170 (TFNDPSGQISTNN), and 1185 to 1194 (GAMNQSSSQK). Residues 1443–1453 (THKKLYRHKSS) show a composition bias toward basic residues. The segment covering 1456–1479 (ALRDEKCKGKHMEREQVHKDESGT) has biased composition (basic and acidic residues).

In terms of tissue distribution, highly expressed in fetal and adult brain, predominantly in the cerebral cortex and the cerebellum. Also expressed in other tissues but to a lesser extent.

The protein resides in the nucleus. The protein localises to the cytoplasm. Involved in neurite outgrowth by regulating cell-cell adhesion via the N-cadherin signaling pathway. May act by regulating expression of protein-coding genes, such as N-cadherins and integrin beta-1 (ITGB1). The protein is Neurite extension and migration factor of Homo sapiens (Human).